A 458-amino-acid chain; its full sequence is Bifunctional protein GlmU (458 aa).

Residues 1-230 (MSLPTYSKLN…EWQVAGINSK (230 aa)) are pyrophosphorylase. UDP-N-acetyl-alpha-D-glucosamine contacts are provided by residues 14 to 17 (LAAG), K28, Q79, and 84 to 85 (GT). D108 is a Mg(2+) binding site. The UDP-N-acetyl-alpha-D-glucosamine site is built by G141, E155, N170, and N228. A Mg(2+)-binding site is contributed by N228. Positions 231 to 251 (QDLAALERVYQGRYAARLLAK) are linker. An N-acetyltransferase region spans residues 252 to 458 (GVTLADPSRI…NWKRPEKVKK (207 aa)). UDP-N-acetyl-alpha-D-glucosamine is bound by residues R334 and K352. The Proton acceptor role is filled by H364. UDP-N-acetyl-alpha-D-glucosamine is bound by residues Y367 and N378. Acetyl-CoA is bound by residues A381, 387-388 (NY), S406, A424, and R441.

The protein in the N-terminal section; belongs to the N-acetylglucosamine-1-phosphate uridyltransferase family. In the C-terminal section; belongs to the transferase hexapeptide repeat family. As to quaternary structure, homotrimer. It depends on Mg(2+) as a cofactor.

Its subcellular location is the cytoplasm. The enzyme catalyses alpha-D-glucosamine 1-phosphate + acetyl-CoA = N-acetyl-alpha-D-glucosamine 1-phosphate + CoA + H(+). It catalyses the reaction N-acetyl-alpha-D-glucosamine 1-phosphate + UTP + H(+) = UDP-N-acetyl-alpha-D-glucosamine + diphosphate. Its pathway is nucleotide-sugar biosynthesis; UDP-N-acetyl-alpha-D-glucosamine biosynthesis; N-acetyl-alpha-D-glucosamine 1-phosphate from alpha-D-glucosamine 6-phosphate (route II): step 2/2. It participates in nucleotide-sugar biosynthesis; UDP-N-acetyl-alpha-D-glucosamine biosynthesis; UDP-N-acetyl-alpha-D-glucosamine from N-acetyl-alpha-D-glucosamine 1-phosphate: step 1/1. It functions in the pathway bacterial outer membrane biogenesis; LPS lipid A biosynthesis. Functionally, catalyzes the last two sequential reactions in the de novo biosynthetic pathway for UDP-N-acetylglucosamine (UDP-GlcNAc). The C-terminal domain catalyzes the transfer of acetyl group from acetyl coenzyme A to glucosamine-1-phosphate (GlcN-1-P) to produce N-acetylglucosamine-1-phosphate (GlcNAc-1-P), which is converted into UDP-GlcNAc by the transfer of uridine 5-monophosphate (from uridine 5-triphosphate), a reaction catalyzed by the N-terminal domain. The polypeptide is Bifunctional protein GlmU (Methylobacillus flagellatus (strain ATCC 51484 / DSM 6875 / VKM B-1610 / KT)).